A 431-amino-acid chain; its full sequence is MVRLEKNDPLMLARQLPLKTVALILAGGRGTRLKDLTIKRAKPAVHFGGKFRIIDFALSNCLNSGIRRIGVITQYQSHTLVQHIQRGWSFFSEEMNEFVDLLPAQQRVHGENWYRGTADAVTQNLDIIRRYGAEYIVILAGDHIYKQDYSHMLIDHVEKGARCTVACLPVPVAEAAAFGVMDVDENDLIIDFVEKPANPPTMPSDPTKSLASMGIYIFDAEYLYDLLEEDDKDENSSHDFGKDIIPKITKAGMAYAHPFPLSCVQSDPTAEPYWRDVGTLEAYWKANLDLASVTPELDMYDQNWPIRTHMESLPPAKFVQDRSGSHGMTLNSLVSGGCIISGSVVVQSVLFPRVRINSFCNIDSSVLLPDVWIGRSCRLRRCVIDRACIIPEGMVIGENAEEDARRFYRSEEGIVLVTREMLRKLQIKQER.

Lysine 39 is a beta-D-fructose 1,6-bisphosphate binding site. 3 residues coordinate AMP: arginine 40, histidine 46, and arginine 52. Tyrosine 114 lines the alpha-D-glucose 1-phosphate pocket. An AMP-binding site is contributed by arginine 130. Residues glycine 179, 194 to 195 (EK), and serine 212 each bind alpha-D-glucose 1-phosphate. Residue arginine 386 participates in AMP binding. Beta-D-fructose 1,6-bisphosphate is bound by residues 419–423 (REMLR) and 429–431 (QER).

The protein belongs to the bacterial/plant glucose-1-phosphate adenylyltransferase family. Homotetramer.

It catalyses the reaction alpha-D-glucose 1-phosphate + ATP + H(+) = ADP-alpha-D-glucose + diphosphate. The protein operates within glycan biosynthesis; glycogen biosynthesis. With respect to regulation, allosterically activated by fructose-1,6-bisphosphate (F16BP) and inhibited by AMP. Functionally, involved in the biosynthesis of ADP-glucose, a building block required for the elongation reactions to produce glycogen. Catalyzes the reaction between ATP and alpha-D-glucose 1-phosphate (G1P) to produce pyrophosphate and ADP-Glc. This Enterobacter sp. (strain 638) protein is Glucose-1-phosphate adenylyltransferase.